We begin with the raw amino-acid sequence, 169 residues long: Der GTPase-activating protein YihI (169 aa).

2 disordered regions span residues 1-92 and 146-169; these read MKPS…EKPM and SYDDDEEEEEDEKQEDMMRLLRGN. The segment covering 10 to 19 has biased composition (basic residues); that stretch reads SKGHAKARRK. Residues 20 to 30 are compositionally biased toward basic and acidic residues; the sequence is TREELDQEARD. Basic residues predominate over residues 31–40; sequence RKRQKKRRGH. Over residues 49 to 58 the composition is skewed to polar residues; it reads GNTTSGSKGQ. A compositionally biased stretch (acidic residues) spans 147–159; that stretch reads YDDDEEEEEDEKQ. Over residues 160-169 the composition is skewed to basic and acidic residues; the sequence is EDMMRLLRGN.

This sequence belongs to the YihI family. Interacts with Der.

Functionally, a GTPase-activating protein (GAP) that modifies Der/EngA GTPase function. May play a role in ribosome biogenesis. This chain is Der GTPase-activating protein YihI, found in Escherichia coli O1:K1 / APEC.